The following is an 802-amino-acid chain: Leucine--tRNA ligase (802 aa).

A 'HIGH' region motif is present at residues 40–51 (PYPSGAGLHVGH). Positions 576–580 (KMSKS) match the 'KMSKS' region motif. Lys-579 lines the ATP pocket.

It belongs to the class-I aminoacyl-tRNA synthetase family.

The protein resides in the cytoplasm. The enzyme catalyses tRNA(Leu) + L-leucine + ATP = L-leucyl-tRNA(Leu) + AMP + diphosphate. This Bacillus cereus (strain ATCC 10987 / NRS 248) protein is Leucine--tRNA ligase.